Reading from the N-terminus, the 1843-residue chain is MADTQTQVAPTPTMRMATAEDLPLPPPPALEDLPLPPPKESFSKFHQQRQASELRRLYRHIHPELRKNLAEAVAEDLAEVLGSEEPTEGDVQCMRWIFENWRLDAIGEHERPAAKEPVLCGDVQATSRKFEEGSFANSTDQEPTRPQPGGGDVRAARWLFETKPLDELTGQAKELEATVREPAASGDVQGTRMLFETRPLDRLGSRPSLQEQSPLELRSEIQELKGDVKKTVKLFQTEPLCAIQDAEGAIHEVKAACREEIQSNAVRSARWLFETRPLDAINQDPSQVRVIRGISLEEGARPDVSATRWIFETQPLDAIREILVDEKDFQPSPDLIPPGPDVQQQQHLFETRALDTLKGDEEAGAEAPPKEEVVPGDVRSTLWLFETKPLDAFRDKVQVGHLQRVDPQDGEGHLSSDSSSALPFSQSAPQRDELKGDVKTFKNLFETLPLDSIGQGEVLAHGSPSREEGTDSAGQAQGIGSPVYAMQDSKGRLHALTSVSREQIVGGDVQGYRWMFETQPLDQLGRSPSTIDVVRGITRQEVVAGDVGTARWLFETQPLEMIHQREQQERQKEEGKSQGDPQPEAPPKGDVQTIRWLFETCPMSELAEKQGSEVTDPTAKAEAQSCTWMFKPQPVDRPVGSREQHLQVSQVPAGERQTDRHVFETEPLQASGRPCGRRPVRYCSRVEIPSGQVSRQKEVFQALEAGKKEEQEPRVIAGSIPAGSVHKFTWLFENCPMGSLAAESIQGGNLLEEQPMSPSGNRMQESQETAAEGTLRTLHATPGILHHGGILMEARGPGELCLAKYVLSGTGQGHPYIRKEELVSGELPRIICQVLRRPDVDQQGLLVQEDPTGQLQLKPLRLPTPGSSGNIEDMDPELQQLLACGLGTSVARTGLVMQETEQGLVALTAYSLQPRLTSKASERSSVQLLASCIDKGDLSGLHSLRWEPPADPSPVPASEGAQSLHPTESIIHVPPLDPSMGMGHLRASGATPCPPQAIGKAVPLAGEAAAPAQLQNTEKQEDSHSGQKGMAVLGKSEGATTTPPGPGAPDLLAAMQSLRMATAEAQSLHQQVLNKHKQGPTPTATSNPIQDGLRKAGATQSNIRPGGGSDPRIPAAPRKVSREEQALPRGLPGGWVTIQDGIYTAHPVRTFDPPGGVQLSQREPQSRHRETALSVQAPRPLQGGPGQSTGPGREEPGGCTQMAWGPPGKAMAEVCPGGLQAAETTLKTAPLGRHILASGPQAAGASPHPHNAFVPPPPTLPAAVTGPDFPAGAHRAEDSIQQASEPLKDPLLHSHSSPAGQRTPGGSQTKTPKLDPTMPPKKKPQLPPKPAHLTQSHPPQRLPKPLPLSPSFSSEVGQREHQRGERDTAIPQPAKVPTTVDQGHIPLARCPSGHSQPSLQHGLSTTAPRPTKNQATGSNAQSSEPPKLNALNHDPTSPQWGPGPSGEQPMEGSHQGAPESPDSLQRNQKELQGLLNQVQALEKEAASSVDVQALRRLFEAVPQLGGAAPQAPAAHQKPEASVEQAFGELTRVSTEVAQLKEQTLARLLDIEEAVHKALSSMSSLQPEASARGHFQGPPKDHSAHKISVTVSSSARPSGSGQEVGGQTAVKNQAKVECHTEAQSQVKIRNHTEARGHTASTAPSTRRQETSREYLCPPRVLPSSRDSPSSPTFISIQSATRKPLETPSFKGNPDVSVKSTQLAQDIGQALLHQKGVQDKTGKKDITQCSVQPEPAPPSASPLPRGWQKSVLELQTGPGSSQHYGAMRTVTEQYEEVDQFGNTVLMSSTTVTEQAEPPRNPGSHLGLHASPLLRQFLHSPAGFSSDLTEAETVQVSCSYSQPAAQ.

Residues 1–10 (MADTQTQVAP) show a composition bias toward polar residues. The segment at 1-48 (MADTQTQVAPTPTMRMATAEDLPLPPPPALEDLPLPPPKESFSKFHQQ) is disordered. The tract at residues 1-54 (MADTQTQVAPTPTMRMATAEDLPLPPPPALEDLPLPPPKESFSKFHQQRQASEL) is interaction with VASP. Positions 23 to 39 (PLPPPPALEDLPLPPPK) are enriched in pro residues. 4 Xin repeats span residues 89-104 (GDVQCMRWIFENWRLD), 121-136 (GDVQATSRKFEEGSFA), 151-166 (GDVRAARWLFETKPLD), and 186-201 (GDVQGTRMLFETRPLD). The segment at 132 to 151 (EGSFANSTDQEPTRPQPGGG) is disordered. Ser-205, Ser-208, and Ser-213 each carry phosphoserine. Xin repeat units lie at residues 226–241 (GDVKKTVKLFQTEPLC) and 264–279 (NAVRSARWLFETRPLD). Ser-295 is modified (phosphoserine). The Xin 7 repeat unit spans residues 302–317 (PDVSATRWIFETQPLD). Position 332 is a phosphoserine (Ser-332). 2 Xin repeats span residues 340-355 (PDVQQQQHLFETRALD) and 376-391 (GDVRSTLWLFETKPLD). Residues 406 to 432 (DPQDGEGHLSSDSSSALPFSQSAPQRD) form a disordered region. Low complexity predominate over residues 415-429 (SSDSSSALPFSQSAP). A Xin 10 repeat occupies 436–451 (GDVKTFKNLFETLPLD). The interval 455-479 (QGEVLAHGSPSREEGTDSAGQAQGI) is disordered. Xin repeat units lie at residues 507–522 (GDVQGYRWMFETQPLD) and 545–560 (GDVGTARWLFETQPLE). Residues 531-632 (IDVVRGITRQ…AQSCTWMFKP (102 aa)) form an interaction with CTNNB1 region. The span at 564–577 (QREQQERQKEEGKS) shows a compositional bias: basic and acidic residues. The tract at residues 564 to 591 (QREQQERQKEEGKSQGDPQPEAPPKGDV) is disordered. 5 Xin repeats span residues 589-604 (GDVQTIRWLFETCPMS), 621-636 (AEAQSCTWMFKPQPVD), 654-669 (GERQTDRHVFETEPLQ), 691-706 (GQVSRQKEVFQALEAG), and 723-738 (GSVHKFTWLFENCPMG). Disordered regions lie at residues 943–999 (SLRW…QAIG), 1063–1205 (AEAQ…MAWG), 1238–1277 (SGPQAAGASPHPHNAFVPPPPTLPAAVTGPDFPAGAHRAE), 1289–1471 (DPLL…QKEL), and 1561–1696 (MSSL…DVSV). 2 stretches are compositionally biased toward polar residues: residues 1064–1073 (EAQSLHQQVL) and 1080–1089 (PTPTATSNPI). A compositionally biased stretch (polar residues) spans 1294–1311 (SHSSPAGQRTPGGSQTKT). Residues 1357–1368 (GQREHQRGERDT) show a composition bias toward basic and acidic residues. Positions 1393 to 1424 (GHSQPSLQHGLSTTAPRPTKNQATGSNAQSSE) are enriched in polar residues. The stretch at 1462–1490 (DSLQRNQKELQGLLNQVQALEKEAASSVD) forms a coiled coil. Polar residues-rich tracts occupy residues 1588-1600 (VTVSSSARPSGSG) and 1663-1679 (SRDSPSSPTFISIQSAT). Residues 1685-1843 (TPSFKGNPDV…SCSYSQPAAQ (159 aa)) form an interaction with FLNC region.

Belongs to the Xin family. Interacts (via N-terminus) with CTTN; the interaction promotes CTTN localization to intercalated disks in cardiomyocytes. Interacts with CTNNB1. Interacts with FLNC and VASP. Interacts with F-actin. In terms of tissue distribution, expressed in skeletal muscle at areas of Z-disk disruption in a longitudinal pattern spanning one or more sarcomeres (at protein level). Expressed in the heart (at protein level). As to expression, expressed in the heart.

Its subcellular location is the cell junction. The protein resides in the adherens junction. The protein localises to the desmosome. Protects actin filaments from depolymerization. Required for correct cardiac intercalated disk ultrastructure via maintenance of cell-cell adhesion stability, and as a result maintains cardiac organ morphology, conductance and heart beat rhythm. Required for development of normal skeletal muscle morphology and muscle fiber type composition. Plays a role in regulating muscle satellite cell activation and survival, as a result promotes muscle fiber recovery from injury and fatigue. The chain is Xin actin-binding repeat-containing protein 1 from Homo sapiens (Human).